Here is a 102-residue protein sequence, read N- to C-terminus: MKDLRTLAAYALALLLLATFVSHSWSAPKGSFQRRNWTPQAMLYLKGTQGRRFVSEDRNEGDLYDTIRLESRSQNTENLSISKAAAFLLNILQQARDEDEPY.

The first 26 residues, 1 to 26, serve as a signal peptide directing secretion; that stretch reads MKDLRTLAAYALALLLLATFVSHSWS. A propeptide spanning residues 27–35 is cleaved from the precursor; the sequence is APKGSFQRR. Glutamine amide is present on Q49. The propeptide occupies 50–102; the sequence is GRRFVSEDRNEGDLYDTIRLESRSQNTENLSISKAAAFLLNILQQARDEDEPY.

The protein belongs to the spexin family. In terms of tissue distribution, mainly expressed in the brain and ovary. Detected bilaterally in the adult brainstem. Expressed in neurons in the dorsal habenula (dHb). In the dHb some neurons project into the interpeduncular nucleus (IPN) where expression often overlaps with galr2a and galr2b. Weakly expressed in the liver, intestine, kidney, heart and gill.

Its subcellular location is the secreted. It is found in the extracellular space. The protein resides in the cytoplasmic vesicle. The protein localises to the secretory vesicle. Its function is as follows. Plays a role in the regulation of food intake and energy metabolism. May also be involved in suppressing the anxiety response by promoting the expression of serotonin-related genes such as fev, tph2 and slc6a4a. Functionally, acts as a ligand for galanin receptors galr2a and galr2b. Brain administration of the peptide inhibits food consumption and elevates levels of glucose, triacylglycerol and cholesterol in the serum. Likely to control food intake by regulating appetite related genes which includes the negative regulation of the orexigenic factor agrp. By controlling food intake it may act as a satiety factor in energy metabolism. In Danio rerio (Zebrafish), this protein is Spexin prohormone 1 (spx).